An 865-amino-acid polypeptide reads, in one-letter code: Protein translocase subunit SecA (865 aa).

ATP is bound by residues Gln-93, 111–115, and Asp-501; that span reads GEGKT. Zn(2+) is bound by residues Cys-841, Cys-843, Cys-852, and Cys-853.

The protein belongs to the SecA family. As to quaternary structure, monomer and homodimer. Part of the essential Sec protein translocation apparatus which comprises SecA, SecYEG and auxiliary proteins SecDF-YajC and YidC. Requires Zn(2+) as cofactor.

Its subcellular location is the cell inner membrane. The protein localises to the cytoplasm. It carries out the reaction ATP + H2O + cellular proteinSide 1 = ADP + phosphate + cellular proteinSide 2.. Part of the Sec protein translocase complex. Interacts with the SecYEG preprotein conducting channel. Has a central role in coupling the hydrolysis of ATP to the transfer of proteins into and across the cell membrane, serving as an ATP-driven molecular motor driving the stepwise translocation of polypeptide chains across the membrane. The chain is Protein translocase subunit SecA from Helicobacter pylori (strain P12).